The primary structure comprises 191 residues: Small ribosomal subunit protein uS5 (191 aa).

The disordered stretch occupies residues 1–20 (MAAERERGGRERSRDREERD). The region spanning 23–86 (FVDKLVHINR…EAAKRNLTRV (64 aa)) is the S5 DRBM domain.

This sequence belongs to the universal ribosomal protein uS5 family. As to quaternary structure, part of the 30S ribosomal subunit. Contacts proteins S4 and S8.

Functionally, with S4 and S12 plays an important role in translational accuracy. In terms of biological role, located at the back of the 30S subunit body where it stabilizes the conformation of the head with respect to the body. The chain is Small ribosomal subunit protein uS5 from Rhodopseudomonas palustris (strain HaA2).